A 157-amino-acid polypeptide reads, in one-letter code: Protein Smg (157 aa).

Belongs to the Smg family.

This chain is Protein Smg, found in Pectobacterium atrosepticum (strain SCRI 1043 / ATCC BAA-672) (Erwinia carotovora subsp. atroseptica).